A 349-amino-acid chain; its full sequence is Lachesin (349 aa).

Positions 1–18 are cleaved as a signal peptide; that stretch reads MDLRLYTIFVGFFSVVYA. In terms of domain architecture, Ig-like V-type spans 22–127; that stretch reads PTISYISQEQ…NKITAEVDLQ (106 aa). Cys-43 and Cys-110 are oxidised to a cystine. Ig-like C2-type domains are found at residues 132 to 218 and 222 to 315; these read PVIS…IAVE and PPVI…VELF. The N-linked (GlcNAc...) asparagine glycan is linked to Asn-137. Disulfide bonds link Cys-154–Cys-201 and Cys-244–Cys-299. Gly-332 carries the GPI-anchor amidated glycine lipid modification. A propeptide spans 333 to 349 (removed in mature form); the sequence is DAAEISTSMALILISTI.

The N-terminus is blocked. Expressed by all neurogenic cells early, but only those cells that become neuroblasts continue to express it. Expressed by neuroblasts, ganglion mother cells and neurons early in their lives, but expression becomes restricted to a subset of neurons as development progresses. Expressed by sensory neurons as they delaminate from the body wall ectoderm. It is also present on growing axons of the CNS and PNS and becomes restricted to a subset of axons later in development.

Its subcellular location is the cell membrane. In terms of biological role, may play a role in early neuronal differentiation and axon outgrowth. This is Lachesin (LAC) from Schistocerca americana (American grasshopper).